The sequence spans 221 residues: Succinate--CoA ligase [ADP-forming] subunit beta, mitochondrial (221 aa).

The ATP-grasp domain maps to 1 to 122 (DVVIKAQVLA…DSNSAYRQKI (122 aa)). Lys-5 contacts ATP. N6-acetyllysine is present on residues Lys-22 and Lys-26. Ser-114 is subject to Phosphoserine. Thr-139 carries the phosphothreonine modification. 171-173 (GIM) provides a ligand contact to substrate. Lys-196 carries the post-translational modification N6-acetyllysine.

This sequence belongs to the succinate/malate CoA ligase beta subunit family. ATP-specific subunit beta subfamily. In terms of assembly, heterodimer of an alpha and a beta subunit. The beta subunit determines specificity for ATP. Interacts with ALAS2.

The protein resides in the mitochondrion. It carries out the reaction succinate + ATP + CoA = succinyl-CoA + ADP + phosphate. It participates in carbohydrate metabolism; tricarboxylic acid cycle; succinate from succinyl-CoA (ligase route): step 1/1. ATP-specific succinyl-CoA synthetase functions in the citric acid cycle (TCA), coupling the hydrolysis of succinyl-CoA to the synthesis of ATP and thus represents the only step of substrate-level phosphorylation in the TCA. The beta subunit provides nucleotide specificity of the enzyme and binds the substrate succinate, while the binding sites for coenzyme A and phosphate are found in the alpha subunit. This chain is Succinate--CoA ligase [ADP-forming] subunit beta, mitochondrial, found in Mesocricetus auratus (Golden hamster).